We begin with the raw amino-acid sequence, 243 residues long: uncharacterized protein (243 aa).

A signal peptide spans 1 to 16; the sequence is MKLLALVALCAVGVAS. A glycan (N-linked (GlcNAc...) asparagine) is linked at asparagine 55. Disordered regions lie at residues 95–126 and 208–235; these read SQGR…EKPS and NQQQ…KPTV. 2 stretches are compositionally biased toward low complexity: residues 99-112 and 209-229; these read NQQQ…SQGG and QQQQ…STTL. Cysteine 141 and cysteine 239 form a disulfide bridge.

It belongs to the protease inhibitor I33 family.

It localises to the secreted. This is an uncharacterized protein from Caenorhabditis elegans.